Reading from the N-terminus, the 565-residue chain is Adenine deaminase (565 aa).

It belongs to the metallo-dependent hydrolases superfamily. Adenine deaminase family. It depends on Mn(2+) as a cofactor.

It catalyses the reaction adenine + H2O + H(+) = hypoxanthine + NH4(+). This Cereibacter sphaeroides (strain KD131 / KCTC 12085) (Rhodobacter sphaeroides) protein is Adenine deaminase.